A 426-amino-acid polypeptide reads, in one-letter code: Na(+)/H(+) antiporter 1 (426 aa).

The next 12 helical transmembrane spans lie at 1 to 21 (MELMMAIGYLGLALVLGSLVA), 29 to 49 (IPDIPLLLLLGLIIGPFLQII), 57 to 77 (IFEYAGPIGLIFILLGGAFTM), 95 to 115 (ITFLITLLISGFIFNMVLNLP), 120 to 140 (VGYLFGAITAATDPATLIPVF), 158 to 178 (IFNDPLGIVSTSVILGLFGLF), 184 to 204 (LIDLITLAGGAIVVGLLLAKI), 208 to 228 (IIIHCDFHEYVAPLVLGGAML), 236 to 256 (LLPSICGYGFSGYMAVAIMGL), 286 to 306 (VFIFVFLGACIKLSMLENYFI), 309 to 329 (LLVALGSIFLARPLGVFLGLI), and 382 to 402 (IAGTIIIGTFMTILLSVILEA).

It belongs to the monovalent cation:proton antiporter 1 (CPA1) transporter (TC 2.A.36) family.

The protein localises to the cell membrane. This is a Na(+)/H(+) antiporter. Can also transport lithium. This is Na(+)/H(+) antiporter 1 from Methanocaldococcus jannaschii (strain ATCC 43067 / DSM 2661 / JAL-1 / JCM 10045 / NBRC 100440) (Methanococcus jannaschii).